Consider the following 330-residue polypeptide: Methionyl-tRNA formyltransferase (330 aa).

Position 112 to 115 (Ser112 to Pro115) interacts with (6S)-5,6,7,8-tetrahydrofolate.

It belongs to the Fmt family.

The catalysed reaction is L-methionyl-tRNA(fMet) + (6R)-10-formyltetrahydrofolate = N-formyl-L-methionyl-tRNA(fMet) + (6S)-5,6,7,8-tetrahydrofolate + H(+). Its function is as follows. Attaches a formyl group to the free amino group of methionyl-tRNA(fMet). The formyl group appears to play a dual role in the initiator identity of N-formylmethionyl-tRNA by promoting its recognition by IF2 and preventing the misappropriation of this tRNA by the elongation apparatus. This chain is Methionyl-tRNA formyltransferase, found in Alcanivorax borkumensis (strain ATCC 700651 / DSM 11573 / NCIMB 13689 / SK2).